We begin with the raw amino-acid sequence, 781 residues long: Ubiquitin carboxyl-terminal hydrolase 14 (781 aa).

The segment at 169-279 (STCPHTENFQ…SALQIYGINI (111 aa)) adopts a UBP-type zinc-finger fold. Residues cysteine 171, histidine 173, cysteine 192, cysteine 195, cysteine 204, cysteine 207, cysteine 212, histidine 224, histidine 228, histidine 235, cysteine 253, and cysteine 256 each contribute to the Zn(2+) site. Positions 323–781 (CGLINLGNSC…NGYIYFYTRC (459 aa)) constitute a USP domain. Cysteine 332 (nucleophile) is an active-site residue. UBA domains are found at residues 576–626 (DEDE…LFQH) and 649–689 (EVDE…VFNN). The active-site Proton acceptor is histidine 737.

It belongs to the peptidase C19 family.

It localises to the cytoplasm. The protein localises to the nucleus. The catalysed reaction is Thiol-dependent hydrolysis of ester, thioester, amide, peptide and isopeptide bonds formed by the C-terminal Gly of ubiquitin (a 76-residue protein attached to proteins as an intracellular targeting signal).. Its function is as follows. Required for the adaptation to the presence of glucose in the growth medium; mediates the degradation of enzymes involved in gluconeogenesis when cells are shifted to glucose-containing medium. Required for proteasome-dependent catabolite degradation of fructose-1,6-bisphosphatase (FBP1). Accelerates proteasomal breakdown of ubiquitinated proteins as it disassembles free ubiquitin chains that would compete with ubiquitinated proteins to bind to the proteasome. The protein is Ubiquitin carboxyl-terminal hydrolase 14 (UBP14) of Saccharomyces cerevisiae (strain ATCC 204508 / S288c) (Baker's yeast).